A 108-amino-acid chain; its full sequence is Thioredoxin (108 aa).

The 107-residue stretch at 2–108 (SEHIVNVTDA…QLAAFLDANI (107 aa)) folds into the Thioredoxin domain. A disulfide bond links C33 and C36.

This sequence belongs to the thioredoxin family.

In terms of biological role, participates in various redox reactions through the reversible oxidation of its active center dithiol to a disulfide and catalyzes dithiol-disulfide exchange reactions. This is Thioredoxin (trxA) from Pseudomonas aeruginosa (strain ATCC 15692 / DSM 22644 / CIP 104116 / JCM 14847 / LMG 12228 / 1C / PRS 101 / PAO1).